The sequence spans 416 residues: Pectin acetylesterase 10 (416 aa).

Residues 1 to 20 form the signal peptide; the sequence is MRKLFLLGFIVAGLVLGNEA. Residue N27 is glycosylated (N-linked (GlcNAc...) asparagine). Active-site charge relay system residues include S198, D294, and H361.

Belongs to the pectinacetylesterase family.

Its subcellular location is the secreted. It is found in the cell wall. Functionally, hydrolyzes acetyl esters in homogalacturonan regions of pectin. In type I primary cell wall, galacturonic acid residues of pectin can be acetylated at the O-2 and O-3 positions. Decreasing the degree of acetylation of pectin gels in vitro alters their physical properties. The sequence is that of Pectin acetylesterase 10 from Arabidopsis thaliana (Mouse-ear cress).